Reading from the N-terminus, the 244-residue chain is Thiol S-methyltransferase TMT1A (244 aa).

The tract at residues 1–28 (MELTIFILRLAIYILTFPLYLLNFLGLW) is targeting to lipid droplets. An N-terminal signal peptide occupies residues 1–29 (MELTIFILRLAIYILTFPLYLLNFLGLWS).

This sequence belongs to the methyltransferase superfamily. (Microbial infection) Interacts with HCV non-structural protein 4B/NS4B (via C-terminal region); this interaction may promote the recruitment of NS4B in the proximity of lipid droplet. In terms of assembly, self-associates. Interacts with SNRNP200; this interaction may promote the odontogenic differentiation. Methylated at lysine residues most likely by EZH2. As to expression, expressed in the liver.

It is found in the lipid droplet. Its subcellular location is the endoplasmic reticulum. The protein resides in the membrane. It localises to the microsome. The protein localises to the cytoplasm. It is found in the cytosol. The enzyme catalyses a thiol + S-adenosyl-L-methionine = a methyl thioether + S-adenosyl-L-homocysteine + H(+). The catalysed reaction is an adenosine in mRNA + S-adenosyl-L-methionine = an N(6)-methyladenosine in mRNA + S-adenosyl-L-homocysteine + H(+). Inhibited by 2,3-dichloro-alpha-methylbenzylamine (DCMB). Functionally, thiol S-methyltransferase that catalyzes the transfer of a methyl group from S-adenosyl-L-methionine to alkyl and phenolic thiol-containing acceptor substrates. Together with TMT1B accounts for most of S-thiol methylation activity in the endoplasmic reticulum of hepatocytes. Able to methylate the N6 position of adenosine residues in long non-coding RNAs (lncRNAs). May facilitate lncRNAs transfer into exosomes at the tumor-stroma interface. Promotes osteogenic and odontogenic differentiation by regulating the expression of genes involved in stem cell differentiation and survival. Targeted from the endoplasmic reticulum to lipid droplets, where it recruits cellular proteins to form functional organelles. In terms of biological role, (Microbial infection) May be involved in the assembly and release stages of hepatitis C virus (HCV) life cycle and thus play a crucial role in HCV propagation. This is Thiol S-methyltransferase TMT1A from Homo sapiens (Human).